A 229-amino-acid polypeptide reads, in one-letter code: Heptaprenylglyceryl phosphate synthase (229 aa).

Residue Lys-12 participates in sn-glycerol 1-phosphate binding. Positions 14 and 40 each coordinate Mg(2+). Sn-glycerol 1-phosphate contacts are provided by residues 159–164 (YLEYSG), Gly-189, and 209–210 (GN).

The protein belongs to the GGGP/HepGP synthase family. Group I subfamily. In terms of assembly, homodimer. It depends on Mg(2+) as a cofactor.

The enzyme catalyses sn-glycerol 1-phosphate + all-trans-heptaprenyl diphosphate = 3-heptaprenyl-sn-glycero-1-phosphate + diphosphate. Its pathway is membrane lipid metabolism; glycerophospholipid metabolism. In terms of biological role, prenyltransferase that catalyzes in vivo the transfer of the heptaprenyl moiety of heptaprenyl pyrophosphate (HepPP; 35 carbon atoms) to the C3 hydroxyl of sn-glycerol-1-phosphate (G1P), producing heptaprenylglyceryl phosphate (HepGP). This reaction is an ether-bond-formation step in the biosynthesis of archaea-type G1P-based membrane lipids found in Bacillales. The protein is Heptaprenylglyceryl phosphate synthase of Bacillus velezensis (strain DSM 23117 / BGSC 10A6 / LMG 26770 / FZB42) (Bacillus amyloliquefaciens subsp. plantarum).